Consider the following 60-residue polypeptide: Cecropin-B type 1 (60 aa).

A signal peptide spans 1-24; that stretch reads MNFNKLFALVLLIGLVLLTGQTEA. I58 bears the Isoleucine amide mark.

Belongs to the cecropin family.

The protein localises to the secreted. Its function is as follows. Cecropins have lytic and antibacterial activity against several Gram-positive and Gram-negative bacteria. This Aedes albopictus (Asian tiger mosquito) protein is Cecropin-B type 1 (CECB1).